The chain runs to 197 residues: DNA-directed RNA polymerases I, II, and III subunit rpabc1 (197 aa).

Belongs to the archaeal Rpo5/eukaryotic RPB5 RNA polymerase subunit family. In terms of assembly, component of the RNA polymerase I (Pol I), RNA polymerase II (Pol II) and RNA polymerase III (Pol III) complexes consisting of at least 13, 12 and 17 subunits, respectively. In RNA Pol II, this subunit is present in 2-fold molar excess over the other subunits.

Its subcellular location is the nucleus. Functionally, DNA-dependent RNA polymerase catalyzes the transcription of DNA into RNA using the four ribonucleoside triphosphates as substrates. Common component of RNA polymerases I, II and III which synthesize ribosomal RNA precursors, mRNA precursors and many functional non-coding RNAs, and small RNAs, such as 5S rRNA and tRNAs, respectively. Pol II is the central component of the basal RNA polymerase II transcription machinery. Pols are composed of mobile elements that move relative to each other. In Pol II, RPB5 is part of the lower jaw surrounding the central large cleft and thought to grab the incoming DNA template. Seems to be the major component in this process. In Dictyostelium discoideum (Social amoeba), this protein is DNA-directed RNA polymerases I, II, and III subunit rpabc1 (polr2e).